A 380-amino-acid polypeptide reads, in one-letter code: Protein trichome birefringence-like 38 (380 aa).

Residues 7–29 (SLLLLFLPLLTVTILSGVEQAFA) form a helical; Signal-anchor for type II membrane protein membrane-spanning segment. A GDS motif motif is present at residues 134-136 (GDS). Positions 357 to 371 (DCSHWCLPGLPDTWN) match the DCXHWCLPGXXDXWN motif motif.

This sequence belongs to the PC-esterase family. TBL subfamily.

The protein resides in the membrane. In terms of biological role, may act as a bridging protein that binds pectin and other cell wall polysaccharides. Probably involved in maintaining esterification of pectins. May be involved in the specific O-acetylation of cell wall polymers. This Arabidopsis thaliana (Mouse-ear cress) protein is Protein trichome birefringence-like 38 (TBL38).